A 425-amino-acid chain; its full sequence is G protein-activated inward rectifier potassium channel 2 (425 aa).

The Cytoplasmic portion of the chain corresponds to 1–91; the sequence is MTMAKLTESM…ILTTLVDLKW (91 aa). Ser18 and Ser25 each carry phosphoserine. A helical transmembrane segment spans residues 92–116; sequence RFNLLIFVMVYTVTWLFFGMIWWLI. Over 117-140 the chain is Extracellular; it reads AYIRGDMDHVEDPSWTPCVTNLNG. The segment at residues 141–152 is an intramembrane region (helical; Pore-forming); it reads FVSAFLFSIETE. The pore-forming intramembrane region spans 153–159; it reads TTIGYGY. The short motif at 154-159 is the Selectivity filter element; sequence TIGYGY. The Extracellular portion of the chain corresponds to 160–168; the sequence is RVITDKCPE. Residues 169–190 form a helical membrane-spanning segment; that stretch reads GIILLLIQSVLGSIVNAFMVGC. Topologically, residues 191 to 425 are cytoplasmic; it reads MFVKISQPKK…VANLENESKV (235 aa). Residues 392-425 form a disordered region; the sequence is NQHAELETEEEEKNPEEQTERNGDVANLENESKV. Positions 422-425 match the PDZ-binding motif; the sequence is ESKV.

The protein belongs to the inward rectifier-type potassium channel (TC 1.A.2.1) family. KCNJ6 subfamily. Associates with KCNJ3/GIRK1 or KCNJ5/GRIK4 to form a G-protein-activated heteromultimer pore-forming unit. The resulting inward current is much larger. Interacts (via PDZ-binding motif) with SNX27 (via PDZ domain); the interaction is required when endocytosed to prevent degradation in lysosomes and promote recycling to the plasma membrane. In terms of tissue distribution, expressed in insulin-secreting cells and brain.

The protein resides in the membrane. The enzyme catalyses K(+)(in) = K(+)(out). Activated by phosphatidylinositol 4,5 biphosphate (PtdIns(4,5)P2). In terms of biological role, inward rectifier potassium channels are characterized by a greater tendency to allow potassium to flow into the cell rather than out of it. Their voltage dependence is regulated by the concentration of extracellular potassium; as external potassium is raised, the voltage range of the channel opening shifts to more positive voltages. The inward rectification is mainly due to the blockage of outward current by internal magnesium. This potassium channel may be involved in the regulation of insulin secretion by glucose and/or neurotransmitters acting through G-protein-coupled receptors. The chain is G protein-activated inward rectifier potassium channel 2 (KCNJ6) from Mesocricetus auratus (Golden hamster).